The chain runs to 126 residues: Large ribosomal subunit protein bL17 (126 aa).

This sequence belongs to the bacterial ribosomal protein bL17 family. In terms of assembly, part of the 50S ribosomal subunit. Contacts protein L32.

This is Large ribosomal subunit protein bL17 from Lactococcus lactis subsp. lactis (strain IL1403) (Streptococcus lactis).